The following is a 407-amino-acid chain: Serine/threonine-protein kinase GRIK2 (407 aa).

The disordered stretch occupies residues 21 to 64; sequence SGSRNQQSPKPYDDDTHSCDSDVTSTARGEEEEDEEEVEQKSRS. Residues 31-40 are compositionally biased toward basic and acidic residues; that stretch reads PYDDDTHSCD. The Protein kinase domain occupies 107–370; sequence YVRVCKIGSG…LKNVSEHPWV (264 aa). ATP is bound by residues 113 to 121 and K136; that span reads IGSGSYGKV. Phosphothreonine; by autocatalysis is present on T153. Residue D238 is the Proton acceptor of the active site. A Phosphoserine; by KIN10 modification is found at S260.

This sequence belongs to the protein kinase superfamily. Ser/Thr protein kinase family. Associates with the SNF1-related protein kinase (SnRK) complex. Interacts with AL1, a geminivirus (TGMV) protein essential for viral replication. In terms of tissue distribution, expressed in shoot apical meristem, leaf primordium and emerging petiole (at protein level).

It catalyses the reaction L-seryl-[protein] + ATP = O-phospho-L-seryl-[protein] + ADP + H(+). The enzyme catalyses L-threonyl-[protein] + ATP = O-phospho-L-threonyl-[protein] + ADP + H(+). Activated when autophosphorylated at Thr-153 and inactivated when phosphorylated at Ser-260 by SnRK1.1/KIN10. In terms of biological role, activates SnRK1.1/KIN10 and SnRK1.2/KIN11 by phosphorylation of their activation-loop 'Thr-198' and 'Thr-176', respectively. Required for the regulation by SnRK1 kinases of the transcription of a large set of genes, the modification the activity of metabolic enzymes, and the control of various nutrient-responsive cellular developmental processes. In Arabidopsis thaliana (Mouse-ear cress), this protein is Serine/threonine-protein kinase GRIK2 (GRIK2).